We begin with the raw amino-acid sequence, 576 residues long: Putative SPbeta prophage-derived single-strand DNA-specific exonuclease YorK (576 aa).

At Y473 the chain carries Phosphotyrosine.

This sequence belongs to the RecJ family.

In terms of biological role, putative single-stranded-DNA-specific exonuclease. This Bacillus subtilis (strain 168) protein is Putative SPbeta prophage-derived single-strand DNA-specific exonuclease YorK (yorK).